The sequence spans 358 residues: Methylthioribose-1-phosphate isomerase (358 aa).

Residues 54–56 (RGA), Arg-96, and Gln-205 contribute to the substrate site. Asp-246 acts as the Proton donor in catalysis. 256–257 (NK) provides a ligand contact to substrate.

It belongs to the eIF-2B alpha/beta/delta subunits family. MtnA subfamily.

It catalyses the reaction 5-(methylsulfanyl)-alpha-D-ribose 1-phosphate = 5-(methylsulfanyl)-D-ribulose 1-phosphate. Its pathway is amino-acid biosynthesis; L-methionine biosynthesis via salvage pathway; L-methionine from S-methyl-5-thio-alpha-D-ribose 1-phosphate: step 1/6. Catalyzes the interconversion of methylthioribose-1-phosphate (MTR-1-P) into methylthioribulose-1-phosphate (MTRu-1-P). The chain is Methylthioribose-1-phosphate isomerase from Ectopseudomonas mendocina (strain ymp) (Pseudomonas mendocina).